A 66-amino-acid polypeptide reads, in one-letter code: DNA gyrase inhibitor YacG (66 aa).

Cysteine 9, cysteine 12, cysteine 28, and cysteine 32 together coordinate Zn(2+). Positions 45–66 (HKIAGSEGSEDELYSGDLEPRH) are disordered.

It belongs to the DNA gyrase inhibitor YacG family. As to quaternary structure, interacts with GyrB. Zn(2+) is required as a cofactor.

Inhibits all the catalytic activities of DNA gyrase by preventing its interaction with DNA. Acts by binding directly to the C-terminal domain of GyrB, which probably disrupts DNA binding by the gyrase. This is DNA gyrase inhibitor YacG from Pseudomonas putida (strain ATCC 700007 / DSM 6899 / JCM 31910 / BCRC 17059 / LMG 24140 / F1).